The sequence spans 425 residues: Serine hydroxymethyltransferase (425 aa).

(6S)-5,6,7,8-tetrahydrofolate-binding positions include leucine 128 and 132-134; that span reads GHL. Lysine 237 is modified (N6-(pyridoxal phosphate)lysine).

Belongs to the SHMT family. In terms of assembly, homodimer. It depends on pyridoxal 5'-phosphate as a cofactor.

The protein resides in the cytoplasm. It carries out the reaction (6R)-5,10-methylene-5,6,7,8-tetrahydrofolate + glycine + H2O = (6S)-5,6,7,8-tetrahydrofolate + L-serine. It participates in one-carbon metabolism; tetrahydrofolate interconversion. Its pathway is amino-acid biosynthesis; glycine biosynthesis; glycine from L-serine: step 1/1. Catalyzes the reversible interconversion of serine and glycine with tetrahydrofolate (THF) serving as the one-carbon carrier. This reaction serves as the major source of one-carbon groups required for the biosynthesis of purines, thymidylate, methionine, and other important biomolecules. Also exhibits THF-independent aldolase activity toward beta-hydroxyamino acids, producing glycine and aldehydes, via a retro-aldol mechanism. The protein is Serine hydroxymethyltransferase of Wolbachia pipientis subsp. Culex pipiens (strain wPip).